The following is a 406-amino-acid chain: Formate-dependent phosphoribosylglycinamide formyltransferase (406 aa).

N(1)-(5-phospho-beta-D-ribosyl)glycinamide-binding positions include 27 to 28 and Glu-87; that span reads EL. ATP is bound by residues Arg-120, Lys-162, 167 to 172, 202 to 205, and Glu-210; these read SSGKGQ and EGFI. Residues 125-320 form the ATP-grasp domain; it reads RLAAETLGLP…EFELHARALL (196 aa). Mg(2+) contacts are provided by Glu-279 and Glu-291. Residues Asp-298, Lys-367, and 374 to 375 each bind N(1)-(5-phospho-beta-D-ribosyl)glycinamide; that span reads RR.

It belongs to the PurK/PurT family. As to quaternary structure, homodimer.

The enzyme catalyses N(1)-(5-phospho-beta-D-ribosyl)glycinamide + formate + ATP = N(2)-formyl-N(1)-(5-phospho-beta-D-ribosyl)glycinamide + ADP + phosphate + H(+). Its pathway is purine metabolism; IMP biosynthesis via de novo pathway; N(2)-formyl-N(1)-(5-phospho-D-ribosyl)glycinamide from N(1)-(5-phospho-D-ribosyl)glycinamide (formate route): step 1/1. In terms of biological role, involved in the de novo purine biosynthesis. Catalyzes the transfer of formate to 5-phospho-ribosyl-glycinamide (GAR), producing 5-phospho-ribosyl-N-formylglycinamide (FGAR). Formate is provided by PurU via hydrolysis of 10-formyl-tetrahydrofolate. In Bordetella parapertussis (strain 12822 / ATCC BAA-587 / NCTC 13253), this protein is Formate-dependent phosphoribosylglycinamide formyltransferase.